Here is a 1062-residue protein sequence, read N- to C-terminus: Valine--tRNA ligase, mitochondrial (1062 aa).

The transit peptide at 1–15 (MPHLPLASFRPPLRG) directs the protein to the mitochondrion. A disordered region spans residues 1 to 73 (MPHLPLASFR…AKGKPPAEST (73 aa)). Basic and acidic residues predominate over residues 42 to 56 (RNREAKQKRLREKQA). A 'HIGH' region motif is present at residues 146 to 156 (PNVTGSLHIGH). Residues 659–663 (KMSKS) carry the 'KMSKS' region motif. Lysine 662 is an ATP binding site.

The protein belongs to the class-I aminoacyl-tRNA synthetase family.

The protein resides in the mitochondrion. The catalysed reaction is tRNA(Val) + L-valine + ATP = L-valyl-tRNA(Val) + AMP + diphosphate. Its function is as follows. Catalyzes the attachment of valine to tRNA(Val) in a two-step reaction: valine is first activated by ATP to form Val-AMP and then transferred to the acceptor end of tRNA(Val). This Sus scrofa (Pig) protein is Valine--tRNA ligase, mitochondrial (VARS2).